The following is a 309-amino-acid chain: UDP-URONIC ACID TRANSPORTER 1 (309 aa).

Helical transmembrane passes span 9–29 (TLFISTLIISWYSSNIGVLLL), 43–63 (IFLTMCHMSACAILSYISIVF), 78–98 (FLKVATLSIVFCASVVGGNIS), 104–124 (VSFNQAVGATTPFFTALFAYL), 131–151 (AWVTYGALVPVVAGVVIASGG), 152–172 (EPGFHWFGFIMCISATAARAF), 193–213 (LMLYMSPIAVIALLPVTLFME), 231–251 (WILLLVNSVMAYSANLLNFLV), 256–278 (SALTLQVLGNAKGAVAVVISILI), and 283–302 (VTVMGIGGYSITVLGVVAYG).

This sequence belongs to the TPT transporter family. TPT (TC 2.A.7.9) subfamily. In terms of tissue distribution, ubiquitous.

The protein resides in the golgi apparatus membrane. In terms of biological role, UDP-glucuronic acid transporter that modulates the polysaccharide composition of seed mucilage. Transports UDP-glucuronic acid (UDP-GlcA) and UDP-galacturonic acid (UDP-GalA) in vitro. This is UDP-URONIC ACID TRANSPORTER 1 from Arabidopsis thaliana (Mouse-ear cress).